Consider the following 123-residue polypeptide: Potassium voltage-gated channel subfamily E member 2 (123 aa).

2 N-linked (GlcNAc...) asparagine glycosylation sites follow: N6 and N29. The chain crosses the membrane as a helical span at residues 49-69; sequence VILYLMVMIGMFSFIVVAILV. The Cytoplasmic portion of the chain corresponds to 70–123; that stretch reads STVKSKRREHSQHPYHQYIVEDWQEKYKSQILHLEDSKATIHENMGATGFTVSP.

The protein belongs to the potassium channel KCNE family. In terms of assembly, interacts with KCNB1. Associates with KCNH2/ERG1. May associate with KCNQ2 and KCNQ3. Associates with HCN1 and probably HCN2. Heteromultimer with KCNC2. Interacts with KCNC2. Interacts with KCNQ1. Forms a heterooligomer complex with KCNQ1 that targets to the membrane raft and leading to currents with an apparently instantaneous activation, a rapid deactivation process and a linear current-voltage relationship and decreases the amplitude of the outward current.

The protein localises to the cell membrane. Its subcellular location is the apical cell membrane. Ancillary protein that functions as a regulatory subunit of the voltage-gated potassium (Kv) channel complex composed of pore-forming and potassium-conducting alpha subunits and of regulatory beta subunits. KCNE2 beta subunit modulates the gating kinetics and enhances stability of the channel complex. Alters the gating of the delayed rectifier Kv channel containing KCNB1 alpha subunit. Associates with KCNH2/HERG alpha subunit Kv channel to form the rapidly activating component of the delayed rectifying potassium current (IKr) in heart. May associate with KCNQ2 and/or KCNQ3 alpha subunits to modulate the native M-type current. May associate with HCN1 and HCN2 channel subunits to increase potassium current. Forms a heterooligomer complex with KCNQ1/KVLQT1 alpha subunits which leads to currents with an apparently instantaneous activation, a rapid deactivation process and a linear current-voltage relationship and decreases the amplitude of the outward current. KCNQ1-KCNE2 channel associates with Na(+)-coupled myo-inositol symporter in the apical membrane of choroid plexus epithelium and regulates the myo-inositol gradient between blood and cerebrospinal fluid with an impact on neuron excitability. This chain is Potassium voltage-gated channel subfamily E member 2, found in Mus musculus (Mouse).